The sequence spans 137 residues: Large ribosomal subunit protein uL16c (137 aa).

Belongs to the universal ribosomal protein uL16 family. As to quaternary structure, part of the 50S ribosomal subunit.

Its subcellular location is the plastid. The protein resides in the chloroplast. The chain is Large ribosomal subunit protein uL16c from Trieres chinensis (Marine centric diatom).